A 406-amino-acid chain; its full sequence is S-adenosylmethionine synthase (406 aa).

ATP is bound at residue 141-146 (GQGSMD).

The protein belongs to the AdoMet synthase 2 family. As to quaternary structure, homodimer. Requires Mg(2+) as cofactor.

It catalyses the reaction L-methionine + ATP + H2O = S-adenosyl-L-methionine + phosphate + diphosphate. The protein operates within amino-acid biosynthesis; S-adenosyl-L-methionine biosynthesis; S-adenosyl-L-methionine from L-methionine: step 1/1. Catalyzes the formation of S-adenosylmethionine from methionine and ATP. In Methanocaldococcus jannaschii (strain ATCC 43067 / DSM 2661 / JAL-1 / JCM 10045 / NBRC 100440) (Methanococcus jannaschii), this protein is S-adenosylmethionine synthase (mat).